The primary structure comprises 281 residues: Pantothenate synthetase (281 aa).

Residue 30-37 (MGNLHQGH) participates in ATP binding. The active-site Proton donor is His-37. Residue Gln-61 coordinates (R)-pantoate. Gln-61 lines the beta-alanine pocket. 149-152 (GNKD) is an ATP binding site. A (R)-pantoate-binding site is contributed by Gln-155. ATP-binding positions include Ile-178 and 186 to 189 (MSSR).

This sequence belongs to the pantothenate synthetase family. Homodimer.

It is found in the cytoplasm. It carries out the reaction (R)-pantoate + beta-alanine + ATP = (R)-pantothenate + AMP + diphosphate + H(+). It functions in the pathway cofactor biosynthesis; (R)-pantothenate biosynthesis; (R)-pantothenate from (R)-pantoate and beta-alanine: step 1/1. In terms of biological role, catalyzes the condensation of pantoate with beta-alanine in an ATP-dependent reaction via a pantoyl-adenylate intermediate. This is Pantothenate synthetase from Shewanella baltica (strain OS195).